The sequence spans 431 residues: Histidine--tRNA ligase (431 aa).

This sequence belongs to the class-II aminoacyl-tRNA synthetase family. Homodimer.

It is found in the cytoplasm. The catalysed reaction is tRNA(His) + L-histidine + ATP = L-histidyl-tRNA(His) + AMP + diphosphate + H(+). This Limosilactobacillus fermentum (strain NBRC 3956 / LMG 18251) (Lactobacillus fermentum) protein is Histidine--tRNA ligase.